A 246-amino-acid chain; its full sequence is Probable transcriptional regulatory protein APP7_1210 (246 aa).

It belongs to the TACO1 family.

The protein localises to the cytoplasm. This chain is Probable transcriptional regulatory protein APP7_1210, found in Actinobacillus pleuropneumoniae serotype 7 (strain AP76).